A 993-amino-acid chain; its full sequence is Desmoglein-3 (993 aa).

The N-terminal stretch at 1-23 (MTCLFPRALGSLALLMVVLLVQG) is a signal peptide. A propeptide spanning residues 24 to 49 (ELHVKPGGQHREDGTALQLAKRRYKR) is cleaved from the precursor. Cadherin domains follow at residues 50–157 (EWVK…PPIF), 158–267 (SQTI…FPVL), 268–388 (RESQ…PPSK), and 384–495 (RPPS…CPSV). The Extracellular segment spans residues 50–617 (EWVKFAKPCR…YGESSWRLGP (568 aa)). N-linked (GlcNAc...) asparagine glycans are attached at residues Asn110 and Asn180. N-linked (GlcNAc...) asparagine glycans are attached at residues Asn459 and Asn546. Residues 618–638 (AAIGLILLGLLMLLLAPLLLL) form a helical membrane-spanning segment. Residues 639-993 (TCDCGSGPIG…LYTKETCSHL (355 aa)) lie on the Cytoplasmic side of the membrane. Residues 641-714 (DCGSGPIGGA…NTYAGGTMVE (74 aa)) are required for interaction with CTNND1 and localization at cell-cell junctions. The interval 845–876 (AKQAKPGPKDSGSGADTCARSMEVPQSGSNRY) is disordered. 2 Desmoglein repeat repeats span residues 905 to 930 (MSTSGSVHPAVAIPDPLQLGNYLLTE) and 931 to 961 (TYSTSGSFAQPTTVTFDPHVTQNVTVTERVI).

In terms of assembly, homodimer. Part of a complex that contains DSG3, PKP1, YAP1 and YWHAG; the complex is required for localization of DSG3 and YAP1 to the cell membrane in keratinocytes. Interacts with PKP2. Interacts with CTNND1; the interaction facilitates DSG3 localization and retention at cell-cell junctions. Interacts with CDH1; the interaction is required for CDH1 localization to developing adherens junctions. Interacts with RAC1; the interaction is required for DSG3 translocation to cell-cell junctions, organization of cortical F-actin bundles and actin anchoring at cell-cell junctions. Interacts with DSC3; the interaction may limit the interaction of DSC3 with p38MAPK family members and therefore repress p38MAPK signaling activation. In terms of tissue distribution, expressed in the basal layer of the outer root sheath of the telogen hair club, specifically at the cell membrane between the apex of the cells and the surrounding hair club (at protein level). Expression is less abundant between the lateral margins of the outer root sheath basal cells (at protein level). Expressed in epidermis. Expressed in the epithelium of the tongue.

It is found in the cell membrane. The protein resides in the cell junction. The protein localises to the desmosome. Its subcellular location is the cytoplasm. It localises to the tight junction. In terms of biological role, a component of desmosome cell-cell junctions which are required for positive regulation of cellular adhesion. Required for adherens and desmosome junction assembly in response to mechanical force in keratinocytes. Required for desmosome-mediated cell-cell adhesion of cells surrounding the telogen hair club and the basal layer of the outer root sheath epithelium, consequently is essential for the anchoring of telogen hairs in the hair follicle. Required for the maintenance of the epithelial barrier via promoting desmosome-mediated intercellular attachment of suprabasal epithelium to basal cells. May play a role in the protein stability of the desmosome plaque components DSP, JUP, PKP1, PKP2 and PKP3. Required for YAP1 localization at the plasma membrane in keratinocytes in response to mechanical strain, via the formation of an interaction complex composed of DSG3, PKP1 and YWHAG. May also be involved in the positive regulation of YAP1 target gene transcription and as a result cell proliferation. Positively regulates cellular contractility and cell junction formation via organization of cortical F-actin bundles and anchoring of actin to tight junctions, in conjunction with RAC1. The cytoplasmic pool of DSG3 is required for the localization of CDH1 and CTNNB1 at developing adherens junctions, potentially via modulation of SRC activity. Inhibits keratinocyte migration via suppression of p38MAPK signaling, may therefore play a role in moderating wound healing. This is Desmoglein-3 (Dsg3) from Mus musculus (Mouse).